The following is a 436-amino-acid chain: 3-ketoacyl-CoA thiolase (436 aa).

Catalysis depends on Cys-99, which acts as the Acyl-thioester intermediate. Active-site proton acceptor residues include His-392 and Cys-422.

Belongs to the thiolase-like superfamily. Thiolase family. As to quaternary structure, heterotetramer of two alpha chains (FadJ) and two beta chains (FadI).

Its subcellular location is the cytoplasm. The enzyme catalyses an acyl-CoA + acetyl-CoA = a 3-oxoacyl-CoA + CoA. It participates in lipid metabolism; fatty acid beta-oxidation. In terms of biological role, catalyzes the final step of fatty acid oxidation in which acetyl-CoA is released and the CoA ester of a fatty acid two carbons shorter is formed. In Pseudoalteromonas translucida (strain TAC 125), this protein is 3-ketoacyl-CoA thiolase.